The chain runs to 248 residues: Myelin protein P0 (248 aa).

A signal peptide spans 1 to 29 (MAPGAPSSSPSPILAALLFSSLVLSPTLA). The Ig-like V-type domain occupies 30-143 (IVVYTDREVY…DIVGKTSQVT (114 aa)). Residues 30–153 (IVVYTDREVY…LYVFEKVPTR (124 aa)) are Extracellular-facing. C50 and C127 are oxidised to a cystine. An N-linked (GlcNAc...) (complex) asparagine glycan is attached at N122. The helical transmembrane segment at 154–179 (YGVVLGAVIGGILGVVLLLLLLFYLI) threads the bilayer. Residues 180-248 (RYCWLRRQAA…GLGESRKDKK (69 aa)) are Cytoplasmic-facing. Phosphoserine; by PKC is present on S210. The tract at residues 222 to 248 (MLDHSRSTKAASEKKSKGLGESRKDKK) is disordered. The span at 224 to 248 (DHSRSTKAASEKKSKGLGESRKDKK) shows a compositional bias: basic and acidic residues. A phosphoserine mark is found at S226 and S228. S233 is modified (phosphoserine; by PKC). A Phosphoserine modification is found at S237. Position 243 is a phosphoserine; by PKC (S243).

Belongs to the myelin P0 protein family. In terms of assembly, homodimer and homotetramer. In terms of processing, N-glycosylated; contains sulfate-substituted glycan. In terms of tissue distribution, found only in peripheral nervous system Schwann cells.

It localises to the cell membrane. Functionally, is an adhesion molecule necessary for normal myelination in the peripheral nervous system. It mediates adhesion between adjacent myelin wraps and ultimately drives myelin compaction. The polypeptide is Myelin protein P0 (Mpz) (Rattus norvegicus (Rat)).